The sequence spans 193 residues: Large ribosomal subunit protein bL25 (193 aa).

Belongs to the bacterial ribosomal protein bL25 family. CTC subfamily. In terms of assembly, part of the 50S ribosomal subunit; part of the 5S rRNA/L5/L18/L25 subcomplex. Contacts the 5S rRNA. Binds to the 5S rRNA independently of L5 and L18.

This is one of the proteins that binds to the 5S RNA in the ribosome where it forms part of the central protuberance. The protein is Large ribosomal subunit protein bL25 of Oleidesulfovibrio alaskensis (strain ATCC BAA-1058 / DSM 17464 / G20) (Desulfovibrio alaskensis).